Reading from the N-terminus, the 234-residue chain is Large ribosomal subunit protein uL1 (234 aa).

It belongs to the universal ribosomal protein uL1 family. Part of the 50S ribosomal subunit.

Functionally, binds directly to 23S rRNA. The L1 stalk is quite mobile in the ribosome, and is involved in E site tRNA release. In terms of biological role, protein L1 is also a translational repressor protein, it controls the translation of the L11 operon by binding to its mRNA. The chain is Large ribosomal subunit protein uL1 from Salmonella gallinarum (strain 287/91 / NCTC 13346).